The chain runs to 576 residues: MLRSFLCRSQNASRNLAVTRISKKKTQTTHSLTSLSRFSYLESSGNASVRNIRFFSTSPPTEENPVSLPADEIPISSAAELTLEESVASALGFSESGDYGGTSVEAVGEDGDSEIVAIENEVYQFDDEKLESVLSLLRSDEESLEFGLNALNVDLHLDFVVRVFESPGISGKNLIRFLKWATQNEEITVTTSLVESLLVAIASDTRRMDAYGLWDLVKEIGEKESCGVLNLEILNELIALFGKLGKSKAAFDVFSKTEEFGFTPNAKTYYLTLEALCKRSFMDWACSVCEKMLKSGVLSEGEQMGNIITWFCKEGKAEEAYSVYELAKTKEKSLPPRFVATLITALCKNDGTITFAQEMLGDLSGEARRRGIKPFSDVIHSLCRMRNVKDAKALLLDMISKGPAPGNAVFNLVVHACSKTGDLDEAKEVLKLMESRGLKPDVYTYTVIISGYAKGGMMDEAQEILAEAKKKHKKLSPVTYHALIRGYCKIEEYDEALKLLNEMDRFGVQPNADEYNKLIQSFCLKALDWEKAEVLFEEMKQKGLHLNAISQGLIRAVKEMESEAKVTEDGNLLAEA.

A mitochondrion-targeting transit peptide spans 1–76 (MLRSFLCRSQ…SLPADEIPIS (76 aa)). PPR repeat units follow at residues 230–264 (NLEILNELIALFGKLGKSKAAFDVFSKTEEFGFTP), 265–299 (NAKTYYLTLEALCKRSFMDWACSVCEKMLKSGVLS), 300–336 (EGEQMGNIITWFCKEGKAEEAYSVYELAKTKEKSLPP), 341–370 (TLITALCKNDGTITFAQEMLGDLSGEARRR), 371–405 (GIKPFSDVIHSLCRMRNVKDAKALLLDMISKGPAP), 406–440 (GNAVFNLVVHACSKTGDLDEAKEVLKLMESRGLKP), 441–475 (DVYTYTVIISGYAKGGMMDEAQEILAEAKKKHKKL), 476–510 (SPVTYHALIRGYCKIEEYDEALKLLNEMDRFGVQP), and 511–546 (NADEYNKLIQSFCLKALDWEKAEVLFEEMKQKGLHL).

The protein belongs to the PPR family. P subfamily. In terms of assembly, component of the mitochondrial ribosome small subunit.

The protein resides in the mitochondrion. The polypeptide is Small ribosomal subunit protein mS80 (rPPR6) (Arabidopsis thaliana (Mouse-ear cress)).